The following is a 643-amino-acid chain: Uromodulin (643 aa).

Residues 1–26 form the signal peptide; the sequence is MKCLFSPNFMWMAAVVTSWVIIPAAT. One can recognise an EGF-like 1 domain in the interval 32–66; it reads KSCSECHSNATCTVDGAATTCACQEGFTGDGLECV. Intrachain disulfides connect Cys-34–Cys-43, Cys-37–Cys-52, Cys-54–Cys-65, Cys-71–Cys-85, Cys-79–Cys-94, Cys-96–Cys-108, Cys-114–Cys-128, Cys-122–Cys-137, Cys-139–Cys-150, Cys-152–Cys-163, Cys-157–Cys-172, Cys-176–Cys-269, Cys-197–Cys-284, Cys-219–Cys-257, Cys-225–Cys-289, Cys-250–Cys-258, Cys-299–Cys-308, Cys-302–Cys-317, Cys-319–Cys-349, Cys-337–Cys-427, and Cys-368–Cys-391. Residue Asn-40 is glycosylated (N-linked (GlcNAc...) asparagine). The 43-residue stretch at 67–109 folds into the EGF-like 2; calcium-binding domain; sequence DLDECAVLGAHNCSATKSCVNTLGSYTCVCPEGFLLSSELGCE. N-linked (GlcNAc...) asparagine glycosylation is present at Asn-78. The 42-residue stretch at 110 to 151 folds into the EGF-like 3; calcium-binding domain; the sequence is DVDECAEPGLSRCHALATCINGEGNYSCVCPAGYLGDGRHCE. Asn-134 carries an N-linked (GlcNAc...) asparagine glycan. The interval 152–173 is beta hairpin; that stretch reads CSPGSCGPGLDCVREGDALVCV. The tract at residues 174 to 293 is D10C; sequence DPCQVHRILD…CHLAYCTDPS (120 aa). N-linked (GlcNAc...) asparagine glycosylation occurs at Asn-234. An N-linked (GlcNAc...) asparagine glycan is attached at Asn-277. Residues 294 to 325 enclose the EGF-like 4 domain; it reads SVEGTCEECRVDEDCKSDNGEWHCQCKQDFNV. Asn-324 carries N-linked (GlcNAc...) asparagine glycosylation. The ZP-N stretch occupies residues 336–431; it reads ECGVDDIKLS…RINFACSYPL (96 aa). The ZP domain occupies 336 to 587; that stretch reads ECGVDDIKLS…EKCRPTCPET (252 aa). N-linked (GlcNAc...) asparagine glycans are attached at residues Asn-398 and Asn-449. The tract at residues 432 to 455 is flexible ZP-N/ZP-C linker; important for secretion and polymerization into filaments; that stretch reads DMKVSLKTSLQPMVSALNISMGGT. The internal hydrophobic patch (IHP) stretch occupies residues 456-466; it reads GTFTVRMALFQ. Residues 456–587 are ZP-C; that stretch reads GTFTVRMALF…EKCRPTCPET (132 aa). Intrachain disulfides connect Cys-508–Cys-568, Cys-529–Cys-584, and Cys-573–Cys-580. N-linked (GlcNAc...) asparagine glycosylation occurs at Asn-515. Residues 588–591 form an essential for cleavage by HPN region; the sequence is RFRS. The external hydrophobic patch (EHP); regulates polymerization into filaments stretch occupies residues 600–608; the sequence is VLNLGPITR. The GPI-anchor amidated serine moiety is linked to residue Ser-621. Residues 622–643 constitute a propeptide, removed in mature form; it reads SLGLLQVWLPLLLSATLTLMSP.

In terms of assembly, homodimer that then polymerizes into long filaments. The filaments can additionally assemble laterally to form a sheet. The filaments consist of a zigzag-shaped backbone with laterally protruding arms which interact with bacterial adhesin fimH. Two fimH molecules can bind to a single UMOD monomer. Post-translationally, N-glycosylated. Proteolytically cleaved at a conserved C-terminal proteolytic cleavage site to generate the secreted form found in urine. This cleavage is catalyzed by HPN.

The protein resides in the apical cell membrane. It is found in the basolateral cell membrane. It localises to the cell projection. The protein localises to the cilium membrane. Its subcellular location is the secreted. Functionally, functions in biogenesis and organization of the apical membrane of epithelial cells of the thick ascending limb of Henle's loop (TALH), where it promotes formation of complex filamentous gel-like structure that may play a role in the water barrier permeability. May serve as a receptor for binding and endocytosis of cytokines (IL-1, IL-2) and TNF. Facilitates neutrophil migration across renal epithelia. In terms of biological role, in the urine, may contribute to colloid osmotic pressure, retards passage of positively charged electrolytes, and inhibits formation of liquid containing supersaturated salts and subsequent formation of salt crystals. Protects against urinary tract infections by binding to type 1 fimbriated E.coli. Binds to bacterial adhesin fimH which mediates the stable formation of bacterial aggregates, prevents the binding of E.coli to uroplakins UPK1A and UPK1B which act as urothelial receptors for type I fimbriae, and allows for pathogen clearance through micturation. Also promotes aggregation of other bacteria including K.pneumoniae, P.aeruginosa and S.mitis and so may also protect against other uropathogens. The polypeptide is Uromodulin (UMOD) (Bos taurus (Bovine)).